We begin with the raw amino-acid sequence, 335 residues long: tRNA pseudouridine synthase D (335 aa).

D77 functions as the Nucleophile in the catalytic mechanism. The TRUD domain occupies 152–308 (GFPNYFTEQR…AQNLNWQFEP (157 aa)).

The protein belongs to the pseudouridine synthase TruD family.

The catalysed reaction is uridine(13) in tRNA = pseudouridine(13) in tRNA. Functionally, responsible for synthesis of pseudouridine from uracil-13 in transfer RNAs. The protein is tRNA pseudouridine synthase D of Actinobacillus succinogenes (strain ATCC 55618 / DSM 22257 / CCUG 43843 / 130Z).